A 396-amino-acid polypeptide reads, in one-letter code: Phosphoglycerate kinase (396 aa).

Substrate is bound by residues 21-23 (DFN), Arg-36, 59-62 (HFDR), Arg-118, and Arg-151. ATP is bound by residues Lys-201, Glu-323, and 353–356 (GGDT).

This sequence belongs to the phosphoglycerate kinase family. As to quaternary structure, monomer.

It localises to the cytoplasm. The catalysed reaction is (2R)-3-phosphoglycerate + ATP = (2R)-3-phospho-glyceroyl phosphate + ADP. It functions in the pathway carbohydrate degradation; glycolysis; pyruvate from D-glyceraldehyde 3-phosphate: step 2/5. This chain is Phosphoglycerate kinase, found in Caulobacter vibrioides (strain ATCC 19089 / CIP 103742 / CB 15) (Caulobacter crescentus).